The sequence spans 140 residues: Small ribosomal subunit protein uS12 (140 aa).

At Asp102 the chain carries 3-methylthioaspartic acid.

It belongs to the universal ribosomal protein uS12 family. As to quaternary structure, part of the 30S ribosomal subunit. Contacts proteins S8 and S17. May interact with IF1 in the 30S initiation complex.

In terms of biological role, with S4 and S5 plays an important role in translational accuracy. Functionally, interacts with and stabilizes bases of the 16S rRNA that are involved in tRNA selection in the A site and with the mRNA backbone. Located at the interface of the 30S and 50S subunits, it traverses the body of the 30S subunit contacting proteins on the other side and probably holding the rRNA structure together. The combined cluster of proteins S8, S12 and S17 appears to hold together the shoulder and platform of the 30S subunit. This chain is Small ribosomal subunit protein uS12, found in Bacillus anthracis (strain A0248).